The chain runs to 631 residues: MKVSTHHFLPSLLVALWSWATVAQAATHTFNWTTGWGNYNVDGNFERPVITCNGEFPWPDLKVKRGDRIQVYLTNGFDDRNTSLHFHGLSQNGTNMMDGPEMITQCPIAPGDTMLYNFTIDDNDGTYWYHSHTGGQYQDGMKGTLVVEPEDSLPFDYDEEVVVQLAEWYYDNVDTLDRKFMNVYNPTGAEPIPQNLIINNTRNMTWNVEPDTTYLLRIVNTGGFVSQYFWIEDHDMTVVEVDGVYVEKNTTSMLYITVAQRYSVLIHTKNDTSKNYAIMQKFDDTMLDVIPNDLMLNATSYMMYDKDGEKPEQSYVDSIDDFLDDFYLTPLDKVELYEDPDYTITVDVVMDNLKNGVNYAFFNNLTFTAPKVPTLMTALSAGKDALNPLVYGTNTNAFVLKKDEIIEIVLNNNDTGKHPFHLHGHIFQLVDRERGYDDAIGEGPHPFDPEDHNPFPDYPMMRDTVYVNPQSSIVLRFKADNPGVWFFHCHIEWHLKQGLALLLIEAPEEMQNTESQQLTDNHKQVCENVGLSWEGNAAGNTNDFLDLVGQNVQVANIPDGFTAKGIVAMTFSCLAGVLGLISLSTYGLMGVKKSEEEIIRDLGMDPDAVEKVDVSDINSDEDSSRTSKNIE.

A signal peptide spans 1–25 (MKVSTHHFLPSLLVALWSWATVAQA). Residues 26 to 564 (ATHTFNWTTG…ANIPDGFTAK (539 aa)) lie on the Extracellular side of the membrane. N-linked (GlcNAc...) asparagine glycosylation is found at Asn31 and Asn81. Plastocyanin-like domains lie at 50–148 (ITCN…LVVE) and 195–297 (NLII…LMLN). Cu cation is bound by residues His85 and His87. Asn92 and Asn117 each carry an N-linked (GlcNAc...) asparagine glycan. Residues His130 and His132 each coordinate Cu cation. N-linked (GlcNAc...) asparagine glycans are attached at residues Asn199, Asn203, Asn249, Asn270, Asn297, Asn364, and Asn413. Residues 387–506 (NPLVYGTNTN…QGLALLLIEA (120 aa)) form the Plastocyanin-like 3 domain. Cu cation is bound by residues His418, His421, His423, His488, Cys489, His490, and His494. The helical transmembrane segment at 565 to 585 (GIVAMTFSCLAGVLGLISLST) threads the bilayer. The Cytoplasmic portion of the chain corresponds to 586-630 (YGLMGVKKSEEEIIRDLGMDPDAVEKVDVSDINSDEDSSRTSKNI). The interval 610 to 631 (EKVDVSDINSDEDSSRTSKNIE) is disordered. Positions 622-631 (DSSRTSKNIE) are enriched in basic and acidic residues.

Belongs to the multicopper oxidase family. Cu cation serves as cofactor.

It localises to the cell membrane. Functionally, iron transport multicopper ferroxidase required for Fe(2+) high affinity uptake. Required to oxidize Fe(2+) and release it from the transporter. Essential component of copper-dependent iron transport. The chain is Iron transport multicopper oxidase FET3 (FET3) from Kluyveromyces lactis (strain ATCC 8585 / CBS 2359 / DSM 70799 / NBRC 1267 / NRRL Y-1140 / WM37) (Yeast).